The primary structure comprises 214 residues: UPF0301 protein NFA_55110 (214 aa).

Residues 1–24 (MARADDPDERKTQGGHGDRRRREF) are disordered.

The protein belongs to the UPF0301 (AlgH) family.

This is UPF0301 protein NFA_55110 from Nocardia farcinica (strain IFM 10152).